A 539-amino-acid polypeptide reads, in one-letter code: Acid-sensing ion channel 4-A (539 aa).

Residues 1–68 (MPIEFVCKIK…SGRLGVRQTL (68 aa)) are Cytoplasmic-facing. Residues 69 to 89 (WALAFLVSLALFLYQAAKCAI) form a helical membrane-spanning segment. The Extracellular portion of the chain corresponds to 90–432 (SYLEHPHVTA…EQKKAYDVAG (343 aa)). 2 disulfide bridges follow: cysteine 116–cysteine 200 and cysteine 178–cysteine 185. N-linked (GlcNAc...) asparagine glycans are attached at residues asparagine 136, asparagine 165, asparagine 179, asparagine 184, asparagine 206, and asparagine 241. Disulfide bonds link cysteine 294–cysteine 369, cysteine 313–cysteine 365, cysteine 317–cysteine 363, cysteine 326–cysteine 347, and cysteine 328–cysteine 340. Residue asparagine 370 is glycosylated (N-linked (GlcNAc...) asparagine). Residues 433–453 (LLGDIGGQMGLFIGASVLTIL) form a helical membrane-spanning segment. A GAS motif; ion selectivity filter motif is present at residues 446-448 (GAS). At 454 to 539 (EILDYVYEVI…HHRVSEDFAC (86 aa)) the chain is on the cytoplasmic side. The segment at 474 to 494 (QRDDKKQTQQQQQASTVATVN) is disordered.

The protein belongs to the amiloride-sensitive sodium channel (TC 1.A.6) family. ASIC4 subfamily. Homotrimer. Heterotrimer; with other ASIC proteins producing functional channels. As to expression, expressed in central nervous system.

It is found in the cell membrane. It catalyses the reaction Na(+)(in) = Na(+)(out). Its activity is regulated as follows. Inhibited by the diuretic drug amiloride. Its function is as follows. Could form pH-gated trimeric sodium channels and function as a postsynaptic excitatory receptors in the nervous system. This Danio rerio (Zebrafish) protein is Acid-sensing ion channel 4-A.